The following is a 420-amino-acid chain: Tryptophan synthase beta chain (420 aa).

Residue K99 is modified to N6-(pyridoxal phosphate)lysine.

The protein belongs to the TrpB family. Tetramer of two alpha and two beta chains. Pyridoxal 5'-phosphate is required as a cofactor.

It carries out the reaction (1S,2R)-1-C-(indol-3-yl)glycerol 3-phosphate + L-serine = D-glyceraldehyde 3-phosphate + L-tryptophan + H2O. It participates in amino-acid biosynthesis; L-tryptophan biosynthesis; L-tryptophan from chorismate: step 5/5. Functionally, the beta subunit is responsible for the synthesis of L-tryptophan from indole and L-serine. This is Tryptophan synthase beta chain from Helicobacter hepaticus (strain ATCC 51449 / 3B1).